A 377-amino-acid polypeptide reads, in one-letter code: Succinyl-diaminopimelate desuccinylase (377 aa).

Histidine 66 contributes to the Zn(2+) binding site. Residue aspartate 68 is part of the active site. Aspartate 99 is a Zn(2+) binding site. Glutamate 133 serves as the catalytic Proton acceptor. Residues glutamate 134, glutamate 162, and histidine 348 each contribute to the Zn(2+) site.

It belongs to the peptidase M20A family. DapE subfamily. Homodimer. The cofactor is Zn(2+). Co(2+) serves as cofactor.

The enzyme catalyses N-succinyl-(2S,6S)-2,6-diaminopimelate + H2O = (2S,6S)-2,6-diaminopimelate + succinate. It participates in amino-acid biosynthesis; L-lysine biosynthesis via DAP pathway; LL-2,6-diaminopimelate from (S)-tetrahydrodipicolinate (succinylase route): step 3/3. Functionally, catalyzes the hydrolysis of N-succinyl-L,L-diaminopimelic acid (SDAP), forming succinate and LL-2,6-diaminopimelate (DAP), an intermediate involved in the bacterial biosynthesis of lysine and meso-diaminopimelic acid, an essential component of bacterial cell walls. In Chromobacterium violaceum (strain ATCC 12472 / DSM 30191 / JCM 1249 / CCUG 213 / NBRC 12614 / NCIMB 9131 / NCTC 9757 / MK), this protein is Succinyl-diaminopimelate desuccinylase.